Reading from the N-terminus, the 180-residue chain is Acireductone dioxygenase (180 aa).

Positions 97, 99, 103, and 141 each coordinate Fe(2+). Residues histidine 97, histidine 99, glutamate 103, and histidine 141 each coordinate Ni(2+).

It belongs to the acireductone dioxygenase (ARD) family. Monomer. Fe(2+) is required as a cofactor. The cofactor is Ni(2+).

The catalysed reaction is 1,2-dihydroxy-5-(methylsulfanyl)pent-1-en-3-one + O2 = 3-(methylsulfanyl)propanoate + CO + formate + 2 H(+). It carries out the reaction 1,2-dihydroxy-5-(methylsulfanyl)pent-1-en-3-one + O2 = 4-methylsulfanyl-2-oxobutanoate + formate + 2 H(+). Its pathway is amino-acid biosynthesis; L-methionine biosynthesis via salvage pathway; L-methionine from S-methyl-5-thio-alpha-D-ribose 1-phosphate: step 5/6. In terms of biological role, catalyzes 2 different reactions between oxygen and the acireductone 1,2-dihydroxy-3-keto-5-methylthiopentene (DHK-MTPene) depending upon the metal bound in the active site. Fe-containing acireductone dioxygenase (Fe-ARD) produces formate and 2-keto-4-methylthiobutyrate (KMTB), the alpha-ketoacid precursor of methionine in the methionine recycle pathway. Ni-containing acireductone dioxygenase (Ni-ARD) produces methylthiopropionate, carbon monoxide and formate, and does not lie on the methionine recycle pathway. The protein is Acireductone dioxygenase of Citrobacter koseri (strain ATCC BAA-895 / CDC 4225-83 / SGSC4696).